The sequence spans 207 residues: High frequency lysogenization protein HflD homolog (207 aa).

It belongs to the HflD family.

It localises to the cytoplasm. Its subcellular location is the cell inner membrane. This chain is High frequency lysogenization protein HflD homolog, found in Cellvibrio japonicus (strain Ueda107) (Pseudomonas fluorescens subsp. cellulosa).